The following is an 89-amino-acid chain: Large ribosomal subunit protein eL31 (89 aa).

It belongs to the eukaryotic ribosomal protein eL31 family.

The chain is Large ribosomal subunit protein eL31 (rpl31e) from Thermoplasma acidophilum (strain ATCC 25905 / DSM 1728 / JCM 9062 / NBRC 15155 / AMRC-C165).